A 112-amino-acid chain; its full sequence is Putative pterin-4-alpha-carbinolamine dehydratase (112 aa).

Belongs to the pterin-4-alpha-carbinolamine dehydratase family.

The catalysed reaction is (4aS,6R)-4a-hydroxy-L-erythro-5,6,7,8-tetrahydrobiopterin = (6R)-L-erythro-6,7-dihydrobiopterin + H2O. The polypeptide is Putative pterin-4-alpha-carbinolamine dehydratase (Shewanella baltica (strain OS223)).